We begin with the raw amino-acid sequence, 916 residues long: MLTNIAKKIFGSRNDRLLKQYRKSVARINALEEQMQALSDADLQAKTAEFKQRLADGQTLDGILPEAFAVCREASRRVLGMRHFDVQLIGGMVLHDGKIAEMRTGEGKTLVATLAVYLNALAGKGVHVVTVNDYLASRDAGIMEPLYNFLGLTVGVIISDMQPFDRQNAYAADITYGTNNEFGFDYLRDNMVTDQYDKVQRELNFAVVDEVDSILIDEARTPLIISGQADDNIQLYQIMNTVPPHLVRQETEEGEGDYWVDEKAHQVILSETGHEHAEQILTQMGLLAENDSLYSAANISLMHHLMAALRAHSLFHKDQHYVIQDGEIVIVDEFTGRLMSGRRWSEGLHQAVEAKEGVEIKRENQTLASITFQNYFRLYTKLSGMTGTADTEAFEFQSIYNLETVIIPTNRPVQRKDLNDQIFRSAEEKFEAVVKDIEECHKRGQPVLVGTTSIENSELVSRLLQKAGLPHNVLNAKEHEREALIVAQAGKVGAITVATNMAGRGTDIVLGGNLKHQTDAIRADETLSDEEKQAQIAALENGWQAEHDKVMEAGGLHIIGTERHESRRIDNQLRGRSGRQGDPGSSRFYLSFEDPLLRLFALDRAAAILNRLAPERGVAIEHNLLTRQIEGAQRKVEGRNFDMRKQVLEYDDVANEQRKVIYSQRNEILTSKDIGDLMQEIRSDAVSDLVDTYMPPDSMEEQWDIPTLENRLAAEFRLQEDIQSWLKADNAIDGQDIKERLIERIENEYAAKTELVGKQAMADFERNVMLQAIDNQWREHLAAMDYLRQGIHLRSYAQKNPKQEYKREAFTMFQDLWNGIKFHIASLLTSVQIEQNPVAAVEEQPVGNIQSIHSESPDIEELLGQSQTDLVTEAFNPDGTDFSPEALEARGQIVHRNDPCPCGSGLKYKQCHGKLA.

Residues Q87, 105–109, and D507 contribute to the ATP site; that span reads GEGKT. Residues C900, C902, C911, and H912 each contribute to the Zn(2+) site.

Belongs to the SecA family. In terms of assembly, monomer and homodimer. Part of the essential Sec protein translocation apparatus which comprises SecA, SecYEG and auxiliary proteins SecDF-YajC and YidC. Requires Zn(2+) as cofactor.

Its subcellular location is the cell inner membrane. It is found in the cytoplasm. It carries out the reaction ATP + H2O + cellular proteinSide 1 = ADP + phosphate + cellular proteinSide 2.. Part of the Sec protein translocase complex. Interacts with the SecYEG preprotein conducting channel. Has a central role in coupling the hydrolysis of ATP to the transfer of proteins into and across the cell membrane, serving both as a receptor for the preprotein-SecB complex and as an ATP-driven molecular motor driving the stepwise translocation of polypeptide chains across the membrane. In Neisseria gonorrhoeae (strain ATCC 700825 / FA 1090), this protein is Protein translocase subunit SecA.